A 447-amino-acid polypeptide reads, in one-letter code: Glutamate--tRNA ligase 1 (447 aa).

Positions 10 to 20 match the 'HIGH' region motif; that stretch reads PSPTGMLHVGN. A 'KMSKS' region motif is present at residues 240–244; it reads KISKR. Position 243 (lysine 243) interacts with ATP.

The protein belongs to the class-I aminoacyl-tRNA synthetase family. Glutamate--tRNA ligase type 1 subfamily. In terms of assembly, monomer.

Its subcellular location is the cytoplasm. It catalyses the reaction tRNA(Glu) + L-glutamate + ATP = L-glutamyl-tRNA(Glu) + AMP + diphosphate. Its function is as follows. Catalyzes the attachment of glutamate to tRNA(Glu) in a two-step reaction: glutamate is first activated by ATP to form Glu-AMP and then transferred to the acceptor end of tRNA(Glu). This is Glutamate--tRNA ligase 1 from Rickettsia rickettsii (strain Sheila Smith).